Here is a 355-residue protein sequence, read N- to C-terminus: Natterin-1 (355 aa).

Residues 1–18 (MIPSVLLVTLLLLSWTSA) form the signal peptide. The propeptide occupies 19 to 27 (EKDLKVRVA).

Belongs to the natterin family. Contains 4 disulfide bonds. In terms of tissue distribution, expressed by the venom gland.

The protein localises to the secreted. Its activity is regulated as follows. Inhibited by tissue-kallikrein inhibitor TKI and trasylol. Plasma kallikrein inhibitor PKSI527 and classical inhibitors of serine-, metallo-, thiol- or aspartate-peptidases evokes a minor inhibition of the peptide digestion. Functionally, shows nociceptive, edema-inducing and kininogenase activity with release of kallidin from low molecular weight kininogen. The cleavage occurs at Met-Lys bonds. The protein is Natterin-1 of Thalassophryne nattereri (Copper Joe toadfish).